Consider the following 112-residue polypeptide: Class I hydrophobin 7 (112 aa).

Residues 1 to 23 (MFARQATSVSAFLVLTLSLFAAA) form the signal peptide. 4 disulfides stabilise this stretch: Cys-36–Cys-93, Cys-43–Cys-87, Cys-44–Cys-74, and Cys-94–Cys-107. Asn-96 carries N-linked (GlcNAc...) asparagine glycosylation.

It belongs to the fungal hydrophobin family. Self-assembles to form functional amyloid fibrils called rodlets. Self-assembly into fibrillar rodlets occurs spontaneously at hydrophobic:hydrophilic interfaces and the rodlets further associate laterally to form amphipathic monolayers.

Its subcellular location is the secreted. It localises to the cell wall. Aerial growth, conidiation, and dispersal of filamentous fungi in the environment rely upon a capability of their secreting small amphipathic proteins called hydrophobins (HPBs) with low sequence identity. Class I can self-assemble into an outermost layer of rodlet bundles on aerial cell surfaces, conferring cellular hydrophobicity that supports fungal growth, development and dispersal; whereas Class II form highly ordered films at water-air interfaces through intermolecular interactions but contribute nothing to the rodlet structure. The polypeptide is Class I hydrophobin 7 (Flammulina velutipes (Agaricus velutipes)).